Here is a 94-residue protein sequence, read N- to C-terminus: Co-chaperonin GroES (94 aa).

This sequence belongs to the GroES chaperonin family. In terms of assembly, heptamer of 7 subunits arranged in a ring. Interacts with the chaperonin GroEL.

It is found in the cytoplasm. Together with the chaperonin GroEL, plays an essential role in assisting protein folding. The GroEL-GroES system forms a nano-cage that allows encapsulation of the non-native substrate proteins and provides a physical environment optimized to promote and accelerate protein folding. GroES binds to the apical surface of the GroEL ring, thereby capping the opening of the GroEL channel. This is Co-chaperonin GroES from Streptococcus pneumoniae (strain Taiwan19F-14).